We begin with the raw amino-acid sequence, 331 residues long: Tetraacyldisaccharide 4'-kinase (331 aa).

Residue Thr-58 to Thr-65 coordinates ATP.

The protein belongs to the LpxK family.

The enzyme catalyses a lipid A disaccharide + ATP = a lipid IVA + ADP + H(+). The protein operates within glycolipid biosynthesis; lipid IV(A) biosynthesis; lipid IV(A) from (3R)-3-hydroxytetradecanoyl-[acyl-carrier-protein] and UDP-N-acetyl-alpha-D-glucosamine: step 6/6. Its function is as follows. Transfers the gamma-phosphate of ATP to the 4'-position of a tetraacyldisaccharide 1-phosphate intermediate (termed DS-1-P) to form tetraacyldisaccharide 1,4'-bis-phosphate (lipid IVA). This is Tetraacyldisaccharide 4'-kinase from Shewanella denitrificans (strain OS217 / ATCC BAA-1090 / DSM 15013).